We begin with the raw amino-acid sequence, 523 residues long: Peptidyl-prolyl cis-trans isomerase 4 (523 aa).

A U-box domain is found at 38 to 111 (KRLPINHCSL…GKFRCPVTFR (74 aa)). The PPIase cyclophilin-type domain occupies 278–433 (KNAFVRLVTN…VSVVIMRAEV (156 aa)).

Belongs to the cyclophilin-type PPIase family. PPIL2 subfamily. As to quaternary structure, interacts with mep-1. In terms of tissue distribution, exclusively in the larval body wall striated muscle cells.

It localises to the nucleus. It catalyses the reaction [protein]-peptidylproline (omega=180) = [protein]-peptidylproline (omega=0). The catalysed reaction is S-ubiquitinyl-[E2 ubiquitin-conjugating enzyme]-L-cysteine + [acceptor protein]-L-lysine = [E2 ubiquitin-conjugating enzyme]-L-cysteine + N(6)-ubiquitinyl-[acceptor protein]-L-lysine.. Its pathway is protein modification; protein ubiquitination. May catalyze the cis-trans isomerization of proline imidic peptide bonds in oligopeptides thereby assisting the folding of proteins. May also function as a chaperone, playing a role in intracellular transport of proteins. May also have a protein ubiquitin ligase activity acting as an E3 ubiquitin protein ligase or as a ubiquitin-ubiquitin ligase promoting elongation of ubiquitin chains on proteins. Influences the hermaphrodite switch from spermatogenesis to oogenesis. Required for body wall muscle cell development. This Caenorhabditis elegans protein is Peptidyl-prolyl cis-trans isomerase 4 (cyn-4).